The chain runs to 77 residues: MPFDIPVETLLIATLYLSLSVTYLLVLPAGLYFYLNNRWYVASSIERLVMYFFVFFLFPGMLLLSPFLNFRPRRREV.

The next 2 helical transmembrane spans lie at 10-30 (LLIATLYLSLSVTYLLVLPAG) and 48-68 (LVMYFFVFFLFPGMLLLSPFL).

This sequence belongs to the complex I NdhL subunit family. In terms of assembly, NDH-1 can be composed of about 15 different subunits; different subcomplexes with different compositions have been identified which probably have different functions.

The protein localises to the cellular thylakoid membrane. It carries out the reaction a plastoquinone + NADH + (n+1) H(+)(in) = a plastoquinol + NAD(+) + n H(+)(out). The enzyme catalyses a plastoquinone + NADPH + (n+1) H(+)(in) = a plastoquinol + NADP(+) + n H(+)(out). NDH-1 shuttles electrons from an unknown electron donor, via FMN and iron-sulfur (Fe-S) centers, to quinones in the respiratory and/or the photosynthetic chain. The immediate electron acceptor for the enzyme in this species is believed to be plastoquinone. Couples the redox reaction to proton translocation, and thus conserves the redox energy in a proton gradient. Cyanobacterial NDH-1 also plays a role in inorganic carbon-concentration. The polypeptide is NAD(P)H-quinone oxidoreductase subunit L (Picosynechococcus sp. (strain ATCC 27264 / PCC 7002 / PR-6) (Agmenellum quadruplicatum)).